A 452-amino-acid polypeptide reads, in one-letter code: Cobyrinate a,c-diamide synthase (452 aa).

Residues 248–441 form the GATase cobBQ-type domain; the sequence is RVAYALDAAF…LHIHFYQNPA (194 aa). Cys-330 serves as the catalytic Nucleophile.

Belongs to the CobB/CbiA family. Mg(2+) serves as cofactor.

It carries out the reaction cob(II)yrinate + 2 L-glutamine + 2 ATP + 2 H2O = cob(II)yrinate a,c diamide + 2 L-glutamate + 2 ADP + 2 phosphate + 2 H(+). The protein operates within cofactor biosynthesis; adenosylcobalamin biosynthesis; cob(II)yrinate a,c-diamide from sirohydrochlorin (anaerobic route): step 10/10. Its function is as follows. Catalyzes the ATP-dependent amidation of the two carboxylate groups at positions a and c of cobyrinate, using either L-glutamine or ammonia as the nitrogen source. This is Cobyrinate a,c-diamide synthase from Listeria innocua serovar 6a (strain ATCC BAA-680 / CLIP 11262).